The following is a 377-amino-acid chain: Chaperone protein DnaJ (377 aa).

The J domain occupies 5 to 70 (DYYEVLGVGR…NKKAAYDQFG (66 aa)). The segment at 133-211 (GLTKELRIPT…CHGDGRVEKT (79 aa)) adopts a CR-type zinc-finger fold. Zn(2+) is bound by residues cysteine 146, cysteine 149, cysteine 163, cysteine 166, cysteine 185, cysteine 188, cysteine 199, and cysteine 202. 4 CXXCXGXG motif repeats span residues 146–153 (CDVCDGSG), 163–170 (CGTCHGQG), 185–192 (CPTCHGRG), and 199–206 (CTKCHGDG).

The protein belongs to the DnaJ family. Homodimer. Requires Zn(2+) as cofactor.

It localises to the cytoplasm. Its function is as follows. Participates actively in the response to hyperosmotic and heat shock by preventing the aggregation of stress-denatured proteins and by disaggregating proteins, also in an autonomous, DnaK-independent fashion. Unfolded proteins bind initially to DnaJ; upon interaction with the DnaJ-bound protein, DnaK hydrolyzes its bound ATP, resulting in the formation of a stable complex. GrpE releases ADP from DnaK; ATP binding to DnaK triggers the release of the substrate protein, thus completing the reaction cycle. Several rounds of ATP-dependent interactions between DnaJ, DnaK and GrpE are required for fully efficient folding. Also involved, together with DnaK and GrpE, in the DNA replication of plasmids through activation of initiation proteins. The chain is Chaperone protein DnaJ from Shewanella sp. (strain MR-4).